A 529-amino-acid chain; its full sequence is Listeriolysin O (529 aa).

Residues 1-24 (MKKIMLVFITLILVSLPIAQQTEA) form the signal peptide. 4 beta stranded membrane-spanning segments follow: residues 214–227 (ESQL…AFKA), 234–243 (VNFGAISEGK), 312–321 (STKVKAAFDA), and 329–341 (SGDV…IKNS). Positions 483-493 (ECTGLAWEWWR) match the Conserved undecapeptide motif. The Cholesterol binding signature appears at 515 to 516 (TL).

Belongs to the cholesterol-dependent cytolysin family. Homooligomeric pore complex of 35 to 50 subunits; when inserted in the host membrane.

It is found in the secreted. It localises to the host membrane. Its subcellular location is the host cell membrane. Its activity is regulated as follows. Activity of listeriolysin O is regulated on multiple levels. It should be high in the phagosome, thereby allowing escape of the bacteria from the phagosomal compartment. Then, once inside the host cytosol, the activity must be controlled to prevent lysis of the host plasma membrane and loss of the intracellular environment. Its function is as follows. A cholesterol-dependent toxin that causes cytolysis by forming pores in cholesterol containing host membranes. After binding to target membranes, the protein undergoes a major conformation change, leading to its insertion in the host membrane and formation of an oligomeric pore complex. Cholesterol is required for binding to host membranes, membrane insertion and pore formation; cholesterol binding is mediated by a Thr-Leu pair in the C-terminus. Acts as a major virulence factor required for the escape of bacteria from phagosomal vacuoles and entry into the host cytosol. Can be reversibly inactivated by oxidation. This chain is Listeriolysin O (hly), found in Listeria monocytogenes serotype 4b (strain F2365).